Here is a 148-residue protein sequence, read N- to C-terminus: MSMGAQEPRNIFLLCRNCGISFEDLRLCCVFCTKQLTVAELTAFALRELNLVWKAGVPYGACARCLLLQGIARRLKYWQYSYYVEGVEEETKESINTQQIRCYTCHKPLVKEEKDRHRNERRRLHKISGYWRGCCAYCWTRCTVRIPQ.

Zinc fingers lie at residues 29 to 65 (CVFCTKQLTVAELTAFALRELNLVWKAGVPYGACARC) and 102 to 138 (CYTCHKPLVKEEKDRHRNERRRLHKISGYWRGCCAYC).

This sequence belongs to the papillomaviridae E6 protein family. Forms homodimers. Interacts with ubiquitin-protein ligase UBE3A/E6-AP; this interaction stimulates UBE3A ubiquitin activity. Interacts with host TP53 and EP300; this interaction inhibits TP53 activity.

The protein localises to the host cytoplasm. It is found in the host nucleus. In terms of biological role, plays a major role in the induction and maintenance of cellular transformation. E6 associates with host UBE3A/E6-AP ubiquitin-protein ligase and modulates its activity. Sequesters tumor suppressor TP53 in the host cytoplasm and modulates its activity by interacting with host EP300 that results in the reduction of TP53 acetylation and activation. In turn, apoptosis induced by DNA damage is inhibited. E6 also protects host keratinocytes from apoptosis by mediating the degradation of host BAK1. May also inhibit host immune response. This is Protein E6 from Homo sapiens (Human).